Consider the following 216-residue polypeptide: MAAPPARARADYDYLIKLLLIGDSGVGKSCLLLRFSDGSFTTSFITTIGIDFKIRTIELDGKRIKLQIWDTAGQERFRTITTAYYRGAMGILLVYDVTDESSFNNIRNWIRNIEQHASDNVNKILVGNKADMDESKRAVPTAKGQALADEYGIKFFETSAKTNLNVEEVFFSIGRDIKQRLSDTDSRAEPATIKISQTDQAAGAGQATQKSACCGT.

22–29 (GDSGVGKS) serves as a coordination point for GTP. The Effector region motif lies at 44–52 (FITTIGIDF). Residues 70–74 (DTAGQ), 128–131 (NKAD), and 159–160 (SA) each bind GTP. 2 S-geranylgeranyl cysteine lipidation sites follow: cysteine 213 and cysteine 214.

The protein belongs to the small GTPase superfamily. Rab family. Interacts with PI5K2.

It is found in the golgi apparatus membrane. The protein resides in the cell membrane. Involved in membrane trafficking from the Golgi to the plasma membrane. The sequence is that of Ras-related protein RABE1c (RABE1C) from Arabidopsis thaliana (Mouse-ear cress).